A 126-amino-acid chain; its full sequence is MFPGGGKFNPRMMKQMQKMMKDFGMDAEDLKAVKVTIELEDTILVFEKPKVQVMDMLGNKTYSITGKAKKVAKAEEKIEDVEVKVEVTEEDIEMVSSQCGVSKEEAKKALEEANGDLAEAILKLGN.

Residues proline 10–lysine 77 form the NAC-A/B domain.

It belongs to the NAC-alpha family. As to quaternary structure, homodimer. Interacts with the ribosome. Binds ribosomal RNA.

Contacts the emerging nascent chain on the ribosome. The chain is Nascent polypeptide-associated complex protein from Methanococcus maripaludis (strain C5 / ATCC BAA-1333).